A 209-amino-acid chain; its full sequence is Segregation and condensation protein B (209 aa).

Belongs to the ScpB family. As to quaternary structure, homodimer. Homodimerization may be required to stabilize the binding of ScpA to the Smc head domains. Component of a cohesin-like complex composed of ScpA, ScpB and the Smc homodimer, in which ScpA and ScpB bind to the head domain of Smc. The presence of the three proteins is required for the association of the complex with DNA.

It localises to the cytoplasm. Participates in chromosomal partition during cell division. May act via the formation of a condensin-like complex containing Smc and ScpA that pull DNA away from mid-cell into both cell halves. This is Segregation and condensation protein B from Geobacillus thermodenitrificans (strain NG80-2).